The sequence spans 209 residues: Uracil phosphoribosyltransferase (209 aa).

5-phospho-alpha-D-ribose 1-diphosphate contacts are provided by residues Arg79, Arg104, and 131 to 139 (DPMLATGGS). Uracil is bound by residues Ile194 and 199-201 (GDA). Asp200 lines the 5-phospho-alpha-D-ribose 1-diphosphate pocket.

The protein belongs to the UPRTase family. Mg(2+) serves as cofactor.

It catalyses the reaction UMP + diphosphate = 5-phospho-alpha-D-ribose 1-diphosphate + uracil. The protein operates within pyrimidine metabolism; UMP biosynthesis via salvage pathway; UMP from uracil: step 1/1. Its activity is regulated as follows. Allosterically activated by GTP. Functionally, catalyzes the conversion of uracil and 5-phospho-alpha-D-ribose 1-diphosphate (PRPP) to UMP and diphosphate. This chain is Uracil phosphoribosyltransferase, found in Bacillus velezensis (strain DSM 23117 / BGSC 10A6 / LMG 26770 / FZB42) (Bacillus amyloliquefaciens subsp. plantarum).